The sequence spans 721 residues: Homeobox-leucine zipper protein HDG2 (721 aa).

The interval 17–70 (NNHNYNHEDNNNEGFLRDDEFDSPNTKSGSENQEGGSGNDQDPLHPNKKKRYHR) is disordered. Residues 21–34 (YNHEDNNNEGFLRD) are compositionally biased toward basic and acidic residues. Positions 64-123 (KKKRYHRHTQLQIQEMEAFFKECPHPDDKQRKQLSRELNLEPLQVKFWFQNKRTQMKNHH) form a DNA-binding region, homeobox. Residues 120–194 (KNHHERHENS…DRISAIAAKY (75 aa)) are a coiled coil. One can recognise an START domain in the interval 242–468 (TESDKPVIID…LDRQCERLAS (227 aa)).

This sequence belongs to the HD-ZIP homeobox family. Class IV subfamily. Interacts with AIL7/PLT7, ANT, BBM and AIL1. Expressed in hairless cell files of the hypocotyl epidermis. Expressed in shoot apical meristem (SAM) with higher levels in L1 cells and the epidermal layer of young leaves. Expressed in primary root tips, in the L1 of apical inflorescence meristems, early flower primordia, carpel epidermis, ovule primordia, nucellus, chalaze and seed coat.

It localises to the nucleus. In terms of biological role, probable transcription factor. Involved, together with PDF2, in the regulation of flower organs development by promoting the expression of APETALA 3 (AP3) in the epidermis and internal cell layers of developing flowers. The polypeptide is Homeobox-leucine zipper protein HDG2 (Arabidopsis thaliana (Mouse-ear cress)).